We begin with the raw amino-acid sequence, 710 residues long: DNA polymerase epsilon subunit B (710 aa).

The tract at residues 116–167 (FLKRPNSPTDTEITTLSQGSATSVVNPDSHSPMMLEEGSPINSDSEPISEHE) is disordered. The span at 121–144 (NSPTDTEITTLSQGSATSVVNPDS) shows a compositional bias: polar residues.

It belongs to the DNA polymerase epsilon subunit B family. In terms of assembly, heterotetramer. Consists of four subunits: POL2, DPB2, DPB3 and DPB4.

Its subcellular location is the nucleus. Its function is as follows. As accessory component of the DNA polymerase epsilon (DNA polymerase II) participates in chromosomal DNA replication. In Kluyveromyces lactis (strain ATCC 8585 / CBS 2359 / DSM 70799 / NBRC 1267 / NRRL Y-1140 / WM37) (Yeast), this protein is DNA polymerase epsilon subunit B (DPB2).